The chain runs to 251 residues: Flap endonuclease Xni (251 aa).

Residue Asp-104 coordinates Mg(2+). Positions 160–249 constitute a 5'-3' exonuclease domain; it reads VTPEQLADYW…LDGNLQQLRL (90 aa). K(+) is bound by residues Leu-171, Ala-172, Pro-180, Val-182, and Ile-185. Residues 184–189 are interaction with DNA; sequence GIGPKS.

The protein belongs to the Xni family. Requires Mg(2+) as cofactor. K(+) serves as cofactor.

Has flap endonuclease activity. During DNA replication, flap endonucleases cleave the 5'-overhanging flap structure that is generated by displacement synthesis when DNA polymerase encounters the 5'-end of a downstream Okazaki fragment. In Klebsiella pneumoniae subsp. pneumoniae (strain ATCC 700721 / MGH 78578), this protein is Flap endonuclease Xni.